A 312-amino-acid polypeptide reads, in one-letter code: MELIILVGIAIALLVVIITLYLLQKKNAAPETKPAAAPQRGVPQRAQEGVPRRAQIARNQRNRLRQNAPAAPAGQVAPAAGAPAARGDSDHEDEGQVDADDARVPQGAVLDEKMGAKKRAKMEAKEQKRLQREQELHDREQRKVKEAKEEAERKQQEDLEAEVERKRVEAERLAKEERERKEHEEYLKMKAAFSVEEEGFEEGDADEQDSLLAGFIQYIRDNKVVVLEDLAVAFKLKTQQVIDRIQELQADGTLTGVIDDRGKFIYVSEEELSAVAKFIKQRGRVSITELAESSNNLINLTPISAGGEEASS.

The Lumenal portion of the chain corresponds to 1 to 2 (ME). Residues 3-23 (LIILVGIAIALLVVIITLYLL) form a helical membrane-spanning segment. Over 24–312 (QKKNAAPETK…ISAGGEEASS (289 aa)) the chain is Cytoplasmic. The segment at 30–163 (PETKPAAAPQ…KQQEDLEAEV (134 aa)) is disordered. Over residues 52–85 (RRAQIARNQRNRLRQNAPAAPAGQVAPAAGAPAA) the composition is skewed to low complexity. Over residues 90 to 99 (DHEDEGQVDA) the composition is skewed to acidic residues. Residues 110 to 163 (LDEKMGAKKRAKMEAKEQKRLQREQELHDREQRKVKEAKEEAERKQQEDLEAEV) are compositionally biased toward basic and acidic residues.

It belongs to the DDRGK1 family. As to quaternary structure, interacts with Atg9; the interaction is transient.

The protein localises to the endoplasmic reticulum membrane. Substrate adapter for ufmylation, the covalent attachment of the ubiquitin-like modifier UFM1 to substrate proteins. Required for ufmylation of Atg9; protects the nervous system during aging, possibly by stabilizing Atg9 and supporting its function. The protein is DDRGK domain-containing protein 1 of Drosophila erecta (Fruit fly).